The following is a 449-amino-acid chain: mRNA-capping enzyme subunit alpha (449 aa).

Lys-66 serves as the catalytic N6-GMP-lysine intermediate. Positions 405–449 (DERKNGAYQHHSSSFSESRQQPKAEPVAEKKQTEPKYVDDDDWSD) are disordered. The segment covering 414–423 (HHSSSFSESR) has biased composition (polar residues). Residues 424 to 442 (QQPKAEPVAEKKQTEPKYV) show a composition bias toward basic and acidic residues.

This sequence belongs to the eukaryotic GTase family. Heterodimer. The mRNA-capping enzyme is composed of two separate chains alpha and beta, respectively a mRNA guanylyltransferase and an mRNA 5'-triphosphate monophosphatase.

It localises to the nucleus. The catalysed reaction is a 5'-end diphospho-ribonucleoside in mRNA + GTP + H(+) = a 5'-end (5'-triphosphoguanosine)-ribonucleoside in mRNA + diphosphate. Second step of mRNA capping. Transfer of the GMP moiety of GTP to the 5'-end of RNA via an enzyme-GMP covalent reaction intermediate. This is mRNA-capping enzyme subunit alpha (CEG1) from Candida glabrata (strain ATCC 2001 / BCRC 20586 / JCM 3761 / NBRC 0622 / NRRL Y-65 / CBS 138) (Yeast).